The following is a 294-amino-acid chain: tRNA dimethylallyltransferase (294 aa).

Position 10 to 17 (10 to 17) interacts with ATP; sequence GPTAVGKT. Position 12 to 17 (12 to 17) interacts with substrate; sequence TAVGKT. Residues 35–38 are interaction with substrate tRNA; sequence DSQQ.

This sequence belongs to the IPP transferase family. In terms of assembly, monomer. The cofactor is Mg(2+).

It catalyses the reaction adenosine(37) in tRNA + dimethylallyl diphosphate = N(6)-dimethylallyladenosine(37) in tRNA + diphosphate. Functionally, catalyzes the transfer of a dimethylallyl group onto the adenine at position 37 in tRNAs that read codons beginning with uridine, leading to the formation of N6-(dimethylallyl)adenosine (i(6)A). The sequence is that of tRNA dimethylallyltransferase from Streptococcus pneumoniae serotype 4 (strain ATCC BAA-334 / TIGR4).